Reading from the N-terminus, the 377-residue chain is Chaperone protein DnaJ (377 aa).

Positions 5-70 (DYYEVLGVAK…QKRAAYDRYG (66 aa)) constitute a J domain. A CR-type zinc finger spans residues 137-215 (GFDTEIRVPS…CDGVGRTRRN (79 aa)). The Zn(2+) site is built by C150, C153, C167, C170, C189, C192, C203, and C206. 4 CXXCXGXG motif repeats span residues 150–157 (CDTCHGSG), 167–174 (CRTCGGSG), 189–196 (CPTCHGTG), and 203–210 (CPSCDGVG).

This sequence belongs to the DnaJ family. As to quaternary structure, homodimer. Requires Zn(2+) as cofactor.

It localises to the cytoplasm. Functionally, participates actively in the response to hyperosmotic and heat shock by preventing the aggregation of stress-denatured proteins and by disaggregating proteins, also in an autonomous, DnaK-independent fashion. Unfolded proteins bind initially to DnaJ; upon interaction with the DnaJ-bound protein, DnaK hydrolyzes its bound ATP, resulting in the formation of a stable complex. GrpE releases ADP from DnaK; ATP binding to DnaK triggers the release of the substrate protein, thus completing the reaction cycle. Several rounds of ATP-dependent interactions between DnaJ, DnaK and GrpE are required for fully efficient folding. Also involved, together with DnaK and GrpE, in the DNA replication of plasmids through activation of initiation proteins. This is Chaperone protein DnaJ from Bordetella parapertussis (strain 12822 / ATCC BAA-587 / NCTC 13253).